The chain runs to 1083 residues: DNA-directed RNA polymerase subunit beta (1083 aa).

The protein belongs to the RNA polymerase beta chain family. In terms of assembly, in plastids the minimal PEP RNA polymerase catalytic core is composed of four subunits: alpha, beta, beta', and beta''. When a (nuclear-encoded) sigma factor is associated with the core the holoenzyme is formed, which can initiate transcription.

It localises to the plastid. Its subcellular location is the chloroplast. It carries out the reaction RNA(n) + a ribonucleoside 5'-triphosphate = RNA(n+1) + diphosphate. Its function is as follows. DNA-dependent RNA polymerase catalyzes the transcription of DNA into RNA using the four ribonucleoside triphosphates as substrates. In Acorus calamus var. americanus (American sweet flag), this protein is DNA-directed RNA polymerase subunit beta.